The chain runs to 421 residues: Gamma-glutamyl phosphate reductase (421 aa).

The protein belongs to the gamma-glutamyl phosphate reductase family.

The protein resides in the cytoplasm. The catalysed reaction is L-glutamate 5-semialdehyde + phosphate + NADP(+) = L-glutamyl 5-phosphate + NADPH + H(+). It participates in amino-acid biosynthesis; L-proline biosynthesis; L-glutamate 5-semialdehyde from L-glutamate: step 2/2. Its function is as follows. Catalyzes the NADPH-dependent reduction of L-glutamate 5-phosphate into L-glutamate 5-semialdehyde and phosphate. The product spontaneously undergoes cyclization to form 1-pyrroline-5-carboxylate. The polypeptide is Gamma-glutamyl phosphate reductase (Pseudomonas paraeruginosa (strain DSM 24068 / PA7) (Pseudomonas aeruginosa (strain PA7))).